Here is a 372-residue protein sequence, read N- to C-terminus: Glutamate 5-kinase (372 aa).

Lys14 is an ATP binding site. Positions 54, 141, and 153 each coordinate substrate. 173–174 (TD) is an ATP binding site. Residues 280 to 358 (RGHVVIDAGA…GEIEAVLGYM (79 aa)) form the PUA domain.

It belongs to the glutamate 5-kinase family.

The protein localises to the cytoplasm. It catalyses the reaction L-glutamate + ATP = L-glutamyl 5-phosphate + ADP. The protein operates within amino-acid biosynthesis; L-proline biosynthesis; L-glutamate 5-semialdehyde from L-glutamate: step 1/2. In terms of biological role, catalyzes the transfer of a phosphate group to glutamate to form L-glutamate 5-phosphate. This chain is Glutamate 5-kinase, found in Burkholderia thailandensis (strain ATCC 700388 / DSM 13276 / CCUG 48851 / CIP 106301 / E264).